A 437-amino-acid chain; its full sequence is Triacylglycerol lipase (437 aa).

The PE domain maps to methionine 1–glutamine 100. The interval serine 101–serine 206 is linker. The tract at residues leucine 207 to alanine 437 is lipase. The Involved in the stabilization of the negatively charged intermediate by the formation of the oxyanion hole signature appears at histidine 239–glycine 241. Active-site residues include serine 309, aspartate 383, and histidine 413.

This sequence in the N-terminal section; belongs to the mycobacterial PE family. PGRS subfamily. In the C-terminal section; belongs to the 'GDXG' lipolytic enzyme family. As to quaternary structure, forms aggregates via its PE domain. Upon export, the PE domain is removed by proteolytic cleavage. Cleavage occurs at the cell surface and is not required for secretion. Cleaved after Gly-149 by the aspartic protease PecA. May also be cleaved before Leu-98 and after Ala-136.

It is found in the cytoplasm. The protein localises to the secreted. The protein resides in the cell wall. It localises to the cell surface. The enzyme catalyses a triacylglycerol + H2O = a diacylglycerol + a fatty acid + H(+). It catalyses the reaction 1,2,3-tri-(9Z-octadecenoyl)-glycerol + H2O = di-(9Z)-octadecenoylglycerol + (9Z)-octadecenoate + H(+). It carries out the reaction an acetyl ester + H2O = an aliphatic alcohol + acetate + H(+). The catalysed reaction is a butanoate ester + H2O = an aliphatic alcohol + butanoate + H(+). The enzyme catalyses a hexanoate ester + H2O = an aliphatic alcohol + hexanoate + H(+). It catalyses the reaction an octanoate ester + H2O = an aliphatic alcohol + octanoate + H(+). It carries out the reaction a dodecanoate ester + H2O = an aliphatic alcohol + dodecanoate + H(+). The catalysed reaction is a tetradecanoate ester + H2O = an aliphatic alcohol + tetradecanoate + H(+). The enzyme catalyses hexadecanoate ester + H2O = an aliphatic alcohol + hexadecanoate + H(+). It catalyses the reaction octadecanoate ester + H2O = an aliphatic alcohol + octadecanoate + H(+). It carries out the reaction 1-butyrylglycerol + H2O = butanoate + glycerol + H(+). The catalysed reaction is 1,2,3-tributanoylglycerol + H2O = dibutanoylglycerol + butanoate + H(+). PE domain down-regulates lipase activity. With respect to regulation, cleavage by PecA does not affect surface localization and lipase activity. Its activity is regulated as follows. Inhibited by diethyl-p-nitrophenyl phosphate (E-600) at 0.5 uM, by phenylmethanesulfonyl fluoride at 5 mM and by polyethylene glycol sorbitan monolaurate (Tween 20). Also inhibited by CaCl(2), CoCl(2), MnCl(2), ZnCl(2) and MgCl(2). Inhibited by several hydrazides compounds. Stimulated slightly by SDS at concentrations up to 2 mM, above which the activity is severely inhibited. In terms of biological role, catalyzes the hydrolysis of both intracellular and extracellular triacylglycerol (TAG). In vitro, can also hydrolyze p-nitrophenyl (pNP) esters with various chain lengths, including pNP-acetate (C2), pNP-butyrate (C4), pNP-caproate (C6), pNP-caprylate (C8), pNP-laurate (C12), pNP-myristate (C14), pNP-palmitate (C16) and pNP-stearate (C18). Also hydrolyzes monobutyrin, tributyrin and trioctanoin. Overexpression results in increase of virulence characterized by reduced survival of infected mouse and increased burden of bacilli in the lungs. Hydrolyzes internal or host-derived TAG depending on its localization. Its function is as follows. Hydrolyzes TAG that accumulates within mycobacterial intracytosolic lipid inclusions (ILI). Probably responsible for the utilization of stored long-chain TAG during the dormancy and reactivation stages of the pathogen. Hydrolyzes host-derived TAG. This chain is Triacylglycerol lipase, found in Mycobacterium tuberculosis (strain ATCC 25618 / H37Rv).